The following is a 579-amino-acid chain: Arginine--tRNA ligase (579 aa).

Residues 123–133 carry the 'HIGH' region motif; the sequence is PNLAKEMHVGH.

Belongs to the class-I aminoacyl-tRNA synthetase family. In terms of assembly, monomer.

Its subcellular location is the cytoplasm. The enzyme catalyses tRNA(Arg) + L-arginine + ATP = L-arginyl-tRNA(Arg) + AMP + diphosphate. This Saccharophagus degradans (strain 2-40 / ATCC 43961 / DSM 17024) protein is Arginine--tRNA ligase.